The primary structure comprises 864 residues: Protein translocase subunit SecA (864 aa).

Residues Gln85, 103 to 107 (GEGKT), and Asp542 contribute to the ATP site.

This sequence belongs to the SecA family. In terms of assembly, monomer and homodimer. Part of the essential Sec protein translocation apparatus which comprises SecA, SecYEG and auxiliary proteins SecDF. Other proteins may also be involved.

The protein localises to the cell inner membrane. Its subcellular location is the cytoplasm. The catalysed reaction is ATP + H2O + cellular proteinSide 1 = ADP + phosphate + cellular proteinSide 2.. Part of the Sec protein translocase complex. Interacts with the SecYEG preprotein conducting channel. Has a central role in coupling the hydrolysis of ATP to the transfer of proteins into and across the cell membrane, serving as an ATP-driven molecular motor driving the stepwise translocation of polypeptide chains across the membrane. In Fervidobacterium nodosum (strain ATCC 35602 / DSM 5306 / Rt17-B1), this protein is Protein translocase subunit SecA.